Here is a 162-residue protein sequence, read N- to C-terminus: Protein archease (162 aa).

Ca(2+) contacts are provided by D34, D161, and I162.

This sequence belongs to the archease family. As to quaternary structure, component of the tRNA-splicing ligase complex.

Functionally, component of the tRNA-splicing ligase complex required to facilitate the enzymatic turnover of catalytic subunit RTCB. Together with ddx1, acts by facilitating the guanylylation of RTCB, a key intermediate step in tRNA ligation. The chain is Protein archease (zbtb8os) from Danio rerio (Zebrafish).